The following is a 469-amino-acid chain: Cytochrome c biogenesis protein CcsB (469 aa).

Transmembrane regions (helical) follow at residues 30-50 (LRLA…GTVI), 89-109 (TPWF…CSLT), and 175-195 (IGPI…IWGS).

Belongs to the Ccs1/CcsB family. In terms of assembly, may interact with CcsA.

Its subcellular location is the cellular thylakoid membrane. Functionally, required during biogenesis of c-type cytochromes (cytochrome c6 and cytochrome f) at the step of heme attachment. The protein is Cytochrome c biogenesis protein CcsB of Synechococcus sp. (strain JA-2-3B'a(2-13)) (Cyanobacteria bacterium Yellowstone B-Prime).